Reading from the N-terminus, the 420-residue chain is Argininosuccinate synthase (420 aa).

ATP is bound at residue 23-31 (AYSGGLDTS). An L-citrulline-binding site is contributed by tyrosine 102. Residue glycine 132 coordinates ATP. L-aspartate-binding residues include threonine 134, asparagine 138, and aspartate 139. Residue asparagine 138 participates in L-citrulline binding. L-citrulline contacts are provided by arginine 142, serine 190, glutamate 274, and tyrosine 286.

It belongs to the argininosuccinate synthase family. Type 1 subfamily. As to quaternary structure, homotetramer.

Its subcellular location is the cytoplasm. The catalysed reaction is L-citrulline + L-aspartate + ATP = 2-(N(omega)-L-arginino)succinate + AMP + diphosphate + H(+). It functions in the pathway amino-acid biosynthesis; L-arginine biosynthesis; L-arginine from L-ornithine and carbamoyl phosphate: step 2/3. The sequence is that of Argininosuccinate synthase from Renibacterium salmoninarum (strain ATCC 33209 / DSM 20767 / JCM 11484 / NBRC 15589 / NCIMB 2235).